Consider the following 504-residue polypeptide: Maturase K (504 aa).

This sequence belongs to the intron maturase 2 family. MatK subfamily.

It is found in the plastid. Its subcellular location is the chloroplast. In terms of biological role, usually encoded in the trnK tRNA gene intron. Probably assists in splicing its own and other chloroplast group II introns. This is Maturase K from Kokia drynarioides (Hawaiian tree cotton).